Reading from the N-terminus, the 664-residue chain is RNA-binding protein RMD9, mitochondrial (664 aa).

The transit peptide at 1-32 directs the protein to the mitochondrion; the sequence is MFRLVQQQTLKSRVPNQFVSASRNSLNSQFRF. The segment at 38–68 is disordered; that stretch reads LERNPQQDPTTAAPAKSSSDKRNSKKKYENN. The span at 55–68 shows a compositional bias: basic and acidic residues; sequence SSDKRNSKKKYENN.

The protein belongs to the RMD9 family. As to quaternary structure, monomer. Post-translationally, phosphorylated. Phosphorylation promotes binding to RNA.

Its subcellular location is the mitochondrion inner membrane. In terms of biological role, binds the 3'-UTR of mitochondrial mRNAs. Involved in the processing or stability of mitochondrial mRNAs. This chain is RNA-binding protein RMD9, mitochondrial (RMD9), found in Kluyveromyces lactis (strain ATCC 8585 / CBS 2359 / DSM 70799 / NBRC 1267 / NRRL Y-1140 / WM37) (Yeast).